Here is a 507-residue protein sequence, read N- to C-terminus: 2,3-bisphosphoglycerate-independent phosphoglycerate mutase (507 aa).

Mn(2+)-binding residues include aspartate 13 and serine 63. Serine 63 serves as the catalytic Phosphoserine intermediate. Residues histidine 122, 152-153 (RD), arginine 184, arginine 190, 256-259 (RADR), and lysine 330 each bind substrate. The Mn(2+) site is built by aspartate 397, histidine 401, aspartate 438, histidine 439, and histidine 457.

Belongs to the BPG-independent phosphoglycerate mutase family. As to quaternary structure, monomer. Mn(2+) is required as a cofactor.

The catalysed reaction is (2R)-2-phosphoglycerate = (2R)-3-phosphoglycerate. It functions in the pathway carbohydrate degradation; glycolysis; pyruvate from D-glyceraldehyde 3-phosphate: step 3/5. In terms of biological role, catalyzes the interconversion of 2-phosphoglycerate and 3-phosphoglycerate. The chain is 2,3-bisphosphoglycerate-independent phosphoglycerate mutase from Chromobacterium violaceum (strain ATCC 12472 / DSM 30191 / JCM 1249 / CCUG 213 / NBRC 12614 / NCIMB 9131 / NCTC 9757 / MK).